Consider the following 257-residue polypeptide: Insulin-induced gene 1 protein (257 aa).

Residues Met1–Leu64 are Cytoplasmic-facing. Positions Cys32–Gly54 are disordered. Residues Val65–Ile87 traverse the membrane as a helical segment. At Gln88 to Ala106 the chain is on the extracellular side. A helical transmembrane segment spans residues Trp107 to Tyr124. Residues Pro125 to Arg139 lie on the Cytoplasmic side of the membrane. Residues Lys136 and Lys138 each participate in a glycyl lysine isopeptide (Lys-Gly) (interchain with G-Cter in ubiquitin) cross-link. Residues Glu140–Asp162 traverse the membrane as a helical segment. Over Phe163 to Asn165 the chain is Extracellular. The chain crosses the membrane as a helical span at residues Asn166–Phe184. Residues Asp185–Ser189 are Cytoplasmic-facing. A Phosphoserine modification is found at Ser187. The chain crosses the membrane as a helical span at residues Gly190–Asn211. Residues Gly212 to Arg225 are Extracellular-facing. Residues Ser226 to Gly243 form a helical membrane-spanning segment. Residues Arg244–Asp257 lie on the Cytoplasmic side of the membrane. The short motif at Pro251 to Asp257 is the KxHxx element.

It belongs to the INSIG family. In terms of assembly, interacts with SCAP; interaction is direct and only takes place in the presence of sterols; it prevents interaction between SCAP and the coat protein complex II (COPII). Associates with the SCAP-SREBP complex (composed of SCAP and SREBF1/SREBP1 or SREBF2/SREBP2); association is mediated via its interaction with SCAP and only takes place in the presence of sterols. Interaction with SCAP is mutually exclusive with PAQR3. Interacts with HMGCR (via its SSD); the interaction, accelerated by sterols, leads to the recruitment of HMGCR to AMFR/gp78 for its ubiquitination by the sterol-mediated ERAD pathway. Interacts with AMFR/gp78 (via its membrane domain); the interaction recruits HMCR at the ER membrane for its ubiquitination and degradation by the sterol-mediated ERAD pathway. Interacts with SOAT2/ACAT2; leading to promote recruitment of AMFR/gp78 and subsequent ubiquitination of SOAT2/ACAT2. Interacts with RNF139. Interacts with RNF145. Post-translationally, phosphorylation at Ser-187 by PCK1 reduces binding to oxysterol, disrupting the interaction between INSIG1 and SCAP, thereby promoting nuclear translocation of SREBP proteins (SREBF1/SREBP1 or SREBF2/SREBP2) and subsequent transcription of downstream lipogenesis-related genes. Ubiquitinated by AMFR/gp78 in response to sterol deprivation, leading to its degradation: when the SCAP-SREBP complex becomes dissociated from INSIG1, INSIG1 is then ubiquitinated and degraded in proteasomes. Although ubiquitination is required for rapid INSIG1 degradation, it is not required for release of the SCAP-SREBP complex. Ubiquitinated by RNF139.

The protein localises to the endoplasmic reticulum membrane. Its function is as follows. Oxysterol-binding protein that mediates feedback control of cholesterol synthesis by controlling both endoplasmic reticulum to Golgi transport of SCAP and degradation of HMGCR. Acts as a negative regulator of cholesterol biosynthesis by mediating the retention of the SCAP-SREBP complex in the endoplasmic reticulum, thereby blocking the processing of sterol regulatory element-binding proteins (SREBPs) SREBF1/SREBP1 and SREBF2/SREBP2. Binds oxysterol, including 25-hydroxycholesterol, regulating interaction with SCAP and retention of the SCAP-SREBP complex in the endoplasmic reticulum. In presence of oxysterol, interacts with SCAP, retaining the SCAP-SREBP complex in the endoplasmic reticulum, thereby preventing SCAP from escorting SREBF1/SREBP1 and SREBF2/SREBP2 to the Golgi. Sterol deprivation or phosphorylation by PCK1 reduce oxysterol-binding, disrupting the interaction between INSIG1 and SCAP, thereby promoting Golgi transport of the SCAP-SREBP complex, followed by processing and nuclear translocation of SREBF1/SREBP1 and SREBF2/SREBP2. Also regulates cholesterol synthesis by regulating degradation of HMGCR: initiates the sterol-mediated ubiquitin-mediated endoplasmic reticulum-associated degradation (ERAD) of HMGCR via recruitment of the reductase to the ubiquitin ligases AMFR/gp78 and/or RNF139. Also regulates degradation of SOAT2/ACAT2 when the lipid levels are low: initiates the ubiquitin-mediated degradation of SOAT2/ACAT2 via recruitment of the ubiquitin ligases AMFR/gp78. This Cricetulus griseus (Chinese hamster) protein is Insulin-induced gene 1 protein.